Here is a 137-residue protein sequence, read N- to C-terminus: Peptide methionine sulfoxide reductase MsrB (137 aa).

Residues 7–129 (VDDLKENLSE…NSASLSFTDE (123 aa)) enclose the MsrB domain. The Zn(2+) site is built by cysteine 46, cysteine 49, cysteine 95, and cysteine 98. The active-site Nucleophile is the cysteine 118.

This sequence belongs to the MsrB Met sulfoxide reductase family. Requires Zn(2+) as cofactor.

It carries out the reaction L-methionyl-[protein] + [thioredoxin]-disulfide + H2O = L-methionyl-(R)-S-oxide-[protein] + [thioredoxin]-dithiol. This is Peptide methionine sulfoxide reductase MsrB from Escherichia fergusonii (strain ATCC 35469 / DSM 13698 / CCUG 18766 / IAM 14443 / JCM 21226 / LMG 7866 / NBRC 102419 / NCTC 12128 / CDC 0568-73).